The primary structure comprises 144 residues: Small ribosomal subunit protein bS6 (144 aa).

The disordered stretch occupies residues Asp-97 to Ala-144. Basic and acidic residues predominate over residues Lys-105–Asp-124.

Belongs to the bacterial ribosomal protein bS6 family.

In terms of biological role, binds together with bS18 to 16S ribosomal RNA. This Xanthomonas campestris pv. campestris (strain 8004) protein is Small ribosomal subunit protein bS6.